The chain runs to 243 residues: MSMLCYTLIIAFLIGIWAAPKSEDNVPLGSPATSDLSDTSCAQTHEGLKTSRNTDQRHPAPKKAEDQELGSAANIIVDPKLFQKRRFQSPRVLFSTQPPPLSRDEQSVEFLDNEDTLNRNIRAKRETHPVHNRGEYSVCDSISVWVANKTKAMDIKGKPVTVMVDVNLNNHVYKQYFFETKCRNPNPVPSGCRGIDSRHWNSYCTTTHTFVKALTMEGNRASWRFIRIDTACVCVISRKTENF.

Residues 1 to 18 (MSMLCYTLIIAFLIGIWA) form the signal peptide. The propeptide occupies 19-125 (APKSEDNVPL…TLNRNIRAKR (107 aa)). A compositionally biased stretch (basic and acidic residues) spans 47–66 (GLKTSRNTDQRHPAPKKAED). The disordered stretch occupies residues 47–69 (GLKTSRNTDQRHPAPKKAEDQEL). Cystine bridges form between C139-C204, C182-C232, and C192-C234. A glycan (N-linked (GlcNAc...) asparagine) is linked at N148.

The protein belongs to the NGF-beta family. As to quaternary structure, homodimer; non-covalently linked. As to expression, expressed by the venom gland.

It is found in the secreted. Nerve growth factor is important for the development and maintenance of the sympathetic and sensory nervous systems. It stimulates division and differentiation of sympathetic and embryonic sensory neurons as well as basal forebrain cholinergic neurons in the brain. Its relevance in the snake venom is not clear. However, it has been shown to inhibit metalloproteinase-dependent proteolysis of platelet glycoprotein Ib alpha, suggesting a metalloproteinase inhibition to prevent metalloprotease autodigestion and/or protection against prey proteases. Binds a lipid between the two protein chains in the homodimer. The lipid-bound form promotes histamine relase from mouse mast cells, contrary to the lipid-free form. This is Venom nerve growth factor 1 from Pseudonaja textilis (Eastern brown snake).